We begin with the raw amino-acid sequence, 83 residues long: Small ribosomal subunit protein eS21 (83 aa).

Belongs to the eukaryotic ribosomal protein eS21 family. In terms of assembly, component of the 40S small ribosomal subunit. Interacts with sta.

It localises to the cytoplasm. It is found in the cytosol. Its subcellular location is the rough endoplasmic reticulum. Functionally, may be an associated component of the ribosome rather than a core structural subunit. May act as a translation initiation factor. Has a role in regulation of cell proliferation in the hematopoietic organs and the imaginal disks of larva. This Drosophila ananassae (Fruit fly) protein is Small ribosomal subunit protein eS21 (RpS21).